A 432-amino-acid chain; its full sequence is 3-phosphoshikimate 1-carboxyvinyltransferase (432 aa).

3-phosphoshikimate-binding residues include Lys22, Ser23, and Arg27. Lys22 provides a ligand contact to phosphoenolpyruvate. Residues Gly96 and Arg127 each coordinate phosphoenolpyruvate. Positions 173, 174, 175, 201, 316, 339, and 343 each coordinate 3-phosphoshikimate. Gln175 lines the phosphoenolpyruvate pocket. The Proton acceptor role is filled by Asp316. Positions 347, 391, and 416 each coordinate phosphoenolpyruvate.

The protein belongs to the EPSP synthase family. In terms of assembly, monomer.

The protein localises to the cytoplasm. It catalyses the reaction 3-phosphoshikimate + phosphoenolpyruvate = 5-O-(1-carboxyvinyl)-3-phosphoshikimate + phosphate. The protein operates within metabolic intermediate biosynthesis; chorismate biosynthesis; chorismate from D-erythrose 4-phosphate and phosphoenolpyruvate: step 6/7. In terms of biological role, catalyzes the transfer of the enolpyruvyl moiety of phosphoenolpyruvate (PEP) to the 5-hydroxyl of shikimate-3-phosphate (S3P) to produce enolpyruvyl shikimate-3-phosphate and inorganic phosphate. This Haemophilus influenzae (strain ATCC 51907 / DSM 11121 / KW20 / Rd) protein is 3-phosphoshikimate 1-carboxyvinyltransferase.